Consider the following 166-residue polypeptide: NAD(P)H-quinone oxidoreductase subunit I, chloroplastic (166 aa).

4Fe-4S ferredoxin-type domains lie at 55 to 84 and 95 to 124; these read GRIH…VDWK and LNYS…MTEE. 8 residues coordinate [4Fe-4S] cluster: Cys-64, Cys-67, Cys-70, Cys-74, Cys-104, Cys-107, Cys-110, and Cys-114.

The protein belongs to the complex I 23 kDa subunit family. As to quaternary structure, NDH is composed of at least 16 different subunits, 5 of which are encoded in the nucleus. [4Fe-4S] cluster is required as a cofactor.

The protein localises to the plastid. The protein resides in the chloroplast thylakoid membrane. It carries out the reaction a plastoquinone + NADH + (n+1) H(+)(in) = a plastoquinol + NAD(+) + n H(+)(out). The enzyme catalyses a plastoquinone + NADPH + (n+1) H(+)(in) = a plastoquinol + NADP(+) + n H(+)(out). Its function is as follows. NDH shuttles electrons from NAD(P)H:plastoquinone, via FMN and iron-sulfur (Fe-S) centers, to quinones in the photosynthetic chain and possibly in a chloroplast respiratory chain. The immediate electron acceptor for the enzyme in this species is believed to be plastoquinone. Couples the redox reaction to proton translocation, and thus conserves the redox energy in a proton gradient. The chain is NAD(P)H-quinone oxidoreductase subunit I, chloroplastic from Stevia rebaudiana (Stevia).